A 493-amino-acid chain; its full sequence is uncharacterized protein (493 aa).

The interval 96-124 (TTVAKASPPPAKPASAPTEITWKGSPQFT) is disordered.

This is an uncharacterized protein from Caulobacter vibrioides (strain ATCC 19089 / CIP 103742 / CB 15) (Caulobacter crescentus).